A 214-amino-acid polypeptide reads, in one-letter code: Adenylate kinase (214 aa).

10-15 contacts ATP; the sequence is GAGKGT. The NMP stretch occupies residues 30-59; the sequence is STGDMFRDHKARGTEIGKQVQAIMDGGGLV. AMP-binding positions include Thr-31, Arg-36, 57–59, 85–88, and Gln-92; these read GLV and GYPR. The tract at residues 126-163 is LID; that stretch reads GRRSCPRCGAVYHVSQNPPRRAGYCDRDDAELVQREDD. ATP is bound at residue Arg-127. Zn(2+) contacts are provided by Cys-130 and Cys-133. ATP is bound at residue 136-137; sequence VY. Zn(2+)-binding residues include Cys-150 and Asp-153. AMP-binding residues include Arg-160 and Arg-171. Gly-199 is a binding site for ATP.

Belongs to the adenylate kinase family. In terms of assembly, monomer.

Its subcellular location is the cytoplasm. It carries out the reaction AMP + ATP = 2 ADP. It participates in purine metabolism; AMP biosynthesis via salvage pathway; AMP from ADP: step 1/1. Its function is as follows. Catalyzes the reversible transfer of the terminal phosphate group between ATP and AMP. Plays an important role in cellular energy homeostasis and in adenine nucleotide metabolism. This Anaeromyxobacter dehalogenans (strain 2CP-C) protein is Adenylate kinase.